Consider the following 726-residue polypeptide: Catalase-peroxidase (726 aa).

The segment at 1–33 is disordered; that stretch reads MSTSDDIHNTTATGKCPFHQGGHDQSAGAGTTT. The tryptophyl-tyrosyl-methioninium (Trp-Tyr) (with M-252) cross-link spans 105–226; that stretch reads WHGAGTYRSI…LGATEMGLIY (122 aa). His106 functions as the Proton acceptor in the catalytic mechanism. A cross-link (tryptophyl-tyrosyl-methioninium (Tyr-Met) (with W-105)) is located at residues 226-252; that stretch reads YVNPEGPDHSGEPLSAAAAIRATFGNM. His267 provides a ligand contact to heme b.

This sequence belongs to the peroxidase family. Peroxidase/catalase subfamily. In terms of assembly, homodimer or homotetramer. Heme b serves as cofactor. Formation of the three residue Trp-Tyr-Met cross-link is important for the catalase, but not the peroxidase activity of the enzyme.

The enzyme catalyses H2O2 + AH2 = A + 2 H2O. It carries out the reaction 2 H2O2 = O2 + 2 H2O. Its function is as follows. Bifunctional enzyme with both catalase and broad-spectrum peroxidase activity. The protein is Catalase-peroxidase of Shigella boydii serotype 4 (strain Sb227).